The chain runs to 124 residues: Large-conductance mechanosensitive channel (124 aa).

2 consecutive transmembrane segments (helical) span residues 15-35 (MDLA…NSLV) and 67-87 (GSFL…FFLI).

It belongs to the MscL family. Homopentamer.

The protein resides in the cell membrane. In terms of biological role, channel that opens in response to stretch forces in the membrane lipid bilayer. May participate in the regulation of osmotic pressure changes within the cell. The protein is Large-conductance mechanosensitive channel of Lactobacillus johnsonii (strain CNCM I-12250 / La1 / NCC 533).